A 317-amino-acid chain; its full sequence is Taste receptor type 2 member 14 (317 aa).

At 1–7 (MGGVIKS) the chain is on the extracellular side. The helical transmembrane segment at 8 to 28 (IFTFVLIVEFIIGNLGNSFIA) threads the bilayer. The Cytoplasmic segment spans residues 29-55 (LVNCIDWVKGRKISSVDRILTALAISK). The helical transmembrane segment at 56–76 (ISLVWLIFGSWCVSVFFPALF) threads the bilayer. Residues 77–87 (ATEKMFRMLTN) are Extracellular-facing. Cholesterol is bound by residues threonine 86 and tryptophan 89. A helical transmembrane segment spans residues 88–108 (IWTVINHFSVWLATGLGTFYF). Residues 109 to 129 (LKIANFSNSIFLYLKWRVKKV) are Cytoplasmic-facing. The helical transmembrane segment at 130 to 150 (VLVLLLVTSVFLFLNIALINI) threads the bilayer. Topologically, residues 151 to 184 (HINASINGYRRNKTCSSDSSNFTRFSSLIVLTST) are extracellular. N-linked (GlcNAc...) asparagine glycosylation is found at asparagine 153, asparagine 162, and asparagine 171. Valine 180 serves as a coordination point for cholesterol. The helical transmembrane segment at 185-205 (VFIFIPFTLSLAMFLLLIFSX) threads the bilayer. Residues 206–232 (WKHRKKMQHTVKRSGDASTKAHRGVKS) lie on the Cytoplasmic side of the membrane. A helical membrane pass occupies residues 233 to 253 (VXTFFLLYAIFCLSFFISVWT). Topologically, residues 254 to 261 (SERLEENL) are extracellular. The helical transmembrane segment at 262-282 (IILSQVMGMAYPSCHSCVLIL) threads the bilayer. The cholesterol site is built by serine 265 and methionine 268. Over 283 to 317 (GNKKLRQASLSVLLWLRYMFKDGEPSGHKEFRESS) the chain is Cytoplasmic.

The protein belongs to the G-protein coupled receptor T2R family. Core component of the TAS2R14-GNAI1 complex, consisting of TAS2R14, GNAI1, GNB1 and GNG2; within the complex interacts with GNAI1. Core component of the TAS2R14-GNAT3 complex, consisting of TAS2R14, GNAT3, GNB1 and GNG2; within the complex interacts with GNAT3. Core component of the TAS2R14-GNAS2 complex, consisting of TAS2R14, GNAS2, GNB1 and GNG2; within the complex interacts with GNAS2.

The protein localises to the membrane. The catalysed reaction is Ca(2+)(in) = Ca(2+)(out). The enzyme catalyses 3',5'-cyclic AMP(in) = 3',5'-cyclic AMP(out). With respect to regulation, basal activity is enhanced by binding to bitter tastants, such as flufenamic acid and aristolochic acid. Regulated by cholesterol in a concentration-dependent manner. Gustducin-linked G-protein coupled receptor that plays a role in the perception of bitterness. The activity of this receptor stimulates GNAT3, activating the gustducin G-protein pathway. Likely plays a role in sensing the chemical composition of the gastrointestinal content and other extra-oral tissues via the inhibitory G-protein pathways. The sequence is that of Taste receptor type 2 member 14 (TAS2R14) from Pan troglodytes (Chimpanzee).